We begin with the raw amino-acid sequence, 706 residues long: MNSLFASTARGLEELLKSELEALGAHDCKIVQGGVHFQGDDRLMYQSLLWSRLASRILLPLNDFKVYSDLDLYLGVQAIDWPSIFGVDKTFAVHFSGVNDEIRNSQYGALKVKDAIVDSFTRKLDQRPTVAKQQPDIRVNVFLQRDMASVALDLSGEGLHQRGYRDLTGQAPLKENLAAAIIQRSGWQLGTPMADPMCGSGTLLIEAAMMASDRAPGLHREHWGFTAWNAFNQELWRELTTEAQVRARRGLQETTSRFFGSDIDRRVIEMARANARRAGVAELITFNANDVSKLVNPLPEGPVGTVISNPPYGERLDSEPALIALHNMLGRIMKASFGGWRLSLFSASPELLSCLQLRAEREFKAKNGPLDCVQKNYQLAANPQGAVGVQVAEDYANRLRKNVKKLDKWAKQQGIECYRLYDADLPDYNVAVDRYGSKVVVQEYAPPKTIDAQKARQRLFDVINATLAVLNLPSNQLVLKTRERQKGKNQYEKLAQKGEFLLVSEYNAKLWVNLTDYLDTGLFLDHRIARQMLGKMSQGKDFLNLFAYTGTASVHAGLGGARSTTTVDMSRTYLEWAEKNLRANGLTGQQHRLIQADCLSWLSNTDEQFDVIFIDPPTFSNSKRMETTFDVQRDHLVLMKELKRLLRRKGTIMFSNNKRGFQMDLDGIKALGLEAKEITAQTQSEDFARNRQIHNCWLVTHSHEEK.

Residues 43–154 (LMYQSLLWSR…RDMASVALDL (112 aa)) form the THUMP domain.

Belongs to the methyltransferase superfamily. RlmKL family.

It is found in the cytoplasm. It catalyses the reaction guanosine(2445) in 23S rRNA + S-adenosyl-L-methionine = N(2)-methylguanosine(2445) in 23S rRNA + S-adenosyl-L-homocysteine + H(+). The enzyme catalyses guanosine(2069) in 23S rRNA + S-adenosyl-L-methionine = N(2)-methylguanosine(2069) in 23S rRNA + S-adenosyl-L-homocysteine + H(+). In terms of biological role, specifically methylates the guanine in position 2445 (m2G2445) and the guanine in position 2069 (m7G2069) of 23S rRNA. The sequence is that of Ribosomal RNA large subunit methyltransferase K/L from Yersinia enterocolitica serotype O:8 / biotype 1B (strain NCTC 13174 / 8081).